Consider the following 238-residue polypeptide: Tabinhibitin 5 (238 aa).

Positions 1 to 23 are cleaved as a signal peptide; it reads MTSILVSRFLLAALVLQYATIDA. The Cell attachment site signature appears at 32–34; that stretch reads RGD. An SCP domain is found at 67-211; that stretch reads LSKINDVRDH…KARALLTCNF (145 aa).

Belongs to the CRISP family. In terms of tissue distribution, expressed in salivary glands.

The protein localises to the secreted. Inhibits platelet aggregation induced by all agonists tested (ADP, arachidonic acid, the thromboxane A2 analog U46619, thrombin, and snake venom snaclecs (TMVA that activates platelet through GPIB, and stejnulxin that specifically acts through GPVI (GP6))). May act by competing with fibrinogen for binding to glycoprotein IIb/IIIa (ITGA2B/ITGB3). This Tabanus yao (Horsefly) protein is Tabinhibitin 5.